The primary structure comprises 295 residues: MEGVILASSALFTVYIGAKWSAQEEEPEEKQLINKRLAVLFPIFGGVTLVLMYLALRYLSKEYIQLILQGYASLASIICFVRSFNPKTTFGKITATMSSIAIALFYFKTKHWMASNILAWALAANSISIMRIDSYNTGALLLGALFFYDIYFVFGTEVMVTVATGIDIPAKYVLPQFKNPTRLSMLGLGDIVMPGLMLALMYRFDLHYYINSTSQPKKHSTYFRNTFIAYGLGLGVTNFALYYFKAAQPALLYLSPACIVAPLLTAWYRDELKTLFSFRSETEDETDEQDKCKST.

The helical transmembrane segment at 1 to 21 (MEGVILASSALFTVYIGAKWS) threads the bilayer. Over 22-35 (AQEEEPEEKQLINK) the chain is Cytoplasmic. Residues 36–56 (RLAVLFPIFGGVTLVLMYLAL) form a helical membrane-spanning segment. Topologically, residues 57–63 (RYLSKEY) are lumenal. Residues 64-84 (IQLILQGYASLASIICFVRSF) form a helical membrane-spanning segment. Over 85–89 (NPKTT) the chain is Cytoplasmic. A helical membrane pass occupies residues 90-106 (FGKITATMSSIAIALFY). The Lumenal portion of the chain corresponds to 107-111 (FKTKH). Residues 112 to 130 (WMASNILAWALAANSISIM) traverse the membrane as a helical segment. Over 131–139 (RIDSYNTGA) the chain is Cytoplasmic. The chain crosses the membrane as a helical span at residues 140-160 (LLLGALFFYDIYFVFGTEVMV). Aspartate 149 is a catalytic residue. The Lumenal segment spans residues 161-183 (TVATGIDIPAKYVLPQFKNPTRL). A helical transmembrane segment spans residues 184 to 204 (SMLGLGDIVMPGLMLALMYRF). Residue aspartate 190 is part of the active site. Residues 205-221 (DLHYYINSTSQPKKHST) are Cytoplasmic-facing. The helical transmembrane segment at 222-244 (YFRNTFIAYGLGLGVTNFALYYF) threads the bilayer. Residues 245-249 (KAAQP) are Lumenal-facing. A PAL motif is present at residues 249–251 (PAL). Residues 250–268 (ALLYLSPACIVAPLLTAWY) traverse the membrane as a helical segment. Residues 269–295 (RDELKTLFSFRSETEDETDEQDKCKST) are Cytoplasmic-facing.

Belongs to the peptidase A22B family.

The protein resides in the endoplasmic reticulum membrane. It localises to the golgi apparatus membrane. This Schizosaccharomyces pombe (strain 972 / ATCC 24843) (Fission yeast) protein is Probable intramembrane protease C25B8.17.